The chain runs to 353 residues: Phosphoribosylformylglycinamidine cyclo-ligase (353 aa).

It belongs to the AIR synthase family.

The protein resides in the cytoplasm. The enzyme catalyses 2-formamido-N(1)-(5-O-phospho-beta-D-ribosyl)acetamidine + ATP = 5-amino-1-(5-phospho-beta-D-ribosyl)imidazole + ADP + phosphate + H(+). The protein operates within purine metabolism; IMP biosynthesis via de novo pathway; 5-amino-1-(5-phospho-D-ribosyl)imidazole from N(2)-formyl-N(1)-(5-phospho-D-ribosyl)glycinamide: step 2/2. The chain is Phosphoribosylformylglycinamidine cyclo-ligase from Pseudomonas aeruginosa (strain LESB58).